The following is an 859-amino-acid chain: Cadherin-related family member 1 (859 aa).

The first 19 residues, 1 to 19, serve as a signal peptide directing secretion; that stretch reads MRRCRWAALALGLLRLCLA. At 20–700 the chain is on the extracellular side; sequence QANFAPHFFD…LIQTKDNPMK (681 aa). 6 consecutive Cadherin domains span residues 36–135, 136–246, 247–353, 359–472, 473–576, and 573–688; these read NGNM…APRF, IQEP…APVF, VGTP…PPTF, PQNR…VPKF, DSLY…PPQF, and PPQF…SPMA. N-linked (GlcNAc...) asparagine glycans are attached at residues Asn58 and Asn89. N-linked (GlcNAc...) asparagine glycosylation is present at Asn296. The helical transmembrane segment at 701 to 721 threads the bilayer; that stretch reads AVGVLAGTMATVVAITVLIST. The Cytoplasmic portion of the chain corresponds to 722-859; it reads ATFWRNKKSN…KKSVHNKAYF (138 aa). A disordered region spans residues 770-838; it reads KEKPPNENCN…PKTMGSPVQS (69 aa). The segment covering 775–791 has biased composition (low complexity); the sequence is NENCNNNSPESSLLPRA.

In terms of assembly, interacts with PROM1. In terms of processing, undergoes proteolytic cleavage; produces a soluble 95 kDa N-terminal fragment and a 25 kDa cell-associated C-terminal fragment.

It is found in the cell membrane. Functionally, potential calcium-dependent cell-adhesion protein. May be required for the structural integrity of the outer segment (OS) of photoreceptor cells. The chain is Cadherin-related family member 1 from Homo sapiens (Human).